Here is a 294-residue protein sequence, read N- to C-terminus: Putative HTH-type transcriptional regulatory protein STK_12680 (294 aa).

An HTH cro/C1-type domain is found at 123–175; it reads LKKKREEMGLSLGEVAQALGVSRISIYDYEREDSYVSIDIAEKLVELFGDDIL. The segment at residues 134-153 is a DNA-binding region (H-T-H motif); sequence LGEVAQALGVSRISIYDYER.

The chain is Putative HTH-type transcriptional regulatory protein STK_12680 from Sulfurisphaera tokodaii (strain DSM 16993 / JCM 10545 / NBRC 100140 / 7) (Sulfolobus tokodaii).